The chain runs to 316 residues: Protoheme IX farnesyltransferase (316 aa).

The next 9 helical transmembrane spans lie at 32-52 (VMSLVVFTAFAGLVLAPGHIH), 53-73 (PVLGTIAILCIAVGAGASGAL), 93-113 (IPAGRIAPSEALAFGLVLSGF), 116-136 (VILGLAVNWLSAGILAFTIFF), 152-172 (NIVIGGAAGAFPPMIGWACVT), 180-200 (TVLFLIIFLWTPAHFWALALF), 221-241 (VTKHQIVAYAVLTAVCAVLPS), 252-271 (LVAAALGAIFIYCSIAVWRM), and 289-309 (IFYLFAVFSALMIDRLAPVLV).

It belongs to the UbiA prenyltransferase family. Protoheme IX farnesyltransferase subfamily.

Its subcellular location is the cell inner membrane. The enzyme catalyses heme b + (2E,6E)-farnesyl diphosphate + H2O = Fe(II)-heme o + diphosphate. It participates in porphyrin-containing compound metabolism; heme O biosynthesis; heme O from protoheme: step 1/1. Its function is as follows. Converts heme B (protoheme IX) to heme O by substitution of the vinyl group on carbon 2 of heme B porphyrin ring with a hydroxyethyl farnesyl side group. The polypeptide is Protoheme IX farnesyltransferase (Rhizobium johnstonii (strain DSM 114642 / LMG 32736 / 3841) (Rhizobium leguminosarum bv. viciae)).